Reading from the N-terminus, the 359-residue chain is Protein LpfD (359 aa).

Positions 1–24 (MLKKLIMFTGLLGGSVLFSGQALA) are cleaved as a signal peptide.

It belongs to the fimbrial protein family.

The protein localises to the fimbrium. This is Protein LpfD (lpfD) from Salmonella typhimurium (strain LT2 / SGSC1412 / ATCC 700720).